The following is a 1401-amino-acid chain: DNA-directed RNA polymerase subunit beta' (1401 aa).

Positions 70, 72, 85, and 88 each coordinate Zn(2+). Residues Asp-460, Asp-462, and Asp-464 each contribute to the Mg(2+) site. Residues Cys-808, Cys-882, Cys-889, and Cys-892 each contribute to the Zn(2+) site.

The protein belongs to the RNA polymerase beta' chain family. In terms of assembly, the RNAP catalytic core consists of 2 alpha, 1 beta, 1 beta' and 1 omega subunit. When a sigma factor is associated with the core the holoenzyme is formed, which can initiate transcription. Requires Mg(2+) as cofactor. It depends on Zn(2+) as a cofactor.

It carries out the reaction RNA(n) + a ribonucleoside 5'-triphosphate = RNA(n+1) + diphosphate. Its function is as follows. DNA-dependent RNA polymerase catalyzes the transcription of DNA into RNA using the four ribonucleoside triphosphates as substrates. The polypeptide is DNA-directed RNA polymerase subunit beta' (Legionella pneumophila (strain Corby)).